Here is a 148-residue protein sequence, read N- to C-terminus: Universal stress protein YxiE (148 aa).

Positions 1 to 18 are cleaved as a signal peptide; the sequence is MFNKMLVAIDGSDMSAKA.

The protein belongs to the universal stress protein A family.

This is Universal stress protein YxiE (yxiE) from Bacillus subtilis (strain 168).